We begin with the raw amino-acid sequence, 209 residues long: Orotate phosphoribosyltransferase (209 aa).

5-phospho-alpha-D-ribose 1-diphosphate contacts are provided by residues arginine 96, lysine 100, histidine 102, and 122–130; that span reads EDLISTGGS. Serine 126 serves as a coordination point for orotate.

Belongs to the purine/pyrimidine phosphoribosyltransferase family. PyrE subfamily. As to quaternary structure, homodimer. The cofactor is Mg(2+).

The enzyme catalyses orotidine 5'-phosphate + diphosphate = orotate + 5-phospho-alpha-D-ribose 1-diphosphate. Its pathway is pyrimidine metabolism; UMP biosynthesis via de novo pathway; UMP from orotate: step 1/2. Its function is as follows. Catalyzes the transfer of a ribosyl phosphate group from 5-phosphoribose 1-diphosphate to orotate, leading to the formation of orotidine monophosphate (OMP). This chain is Orotate phosphoribosyltransferase, found in Streptococcus pyogenes serotype M5 (strain Manfredo).